A 283-amino-acid chain; its full sequence is Protoheme IX farnesyltransferase (283 aa).

7 helical membrane passes run 13–33 (ISSV…PTGL), 35–55 (GGTL…VGTL), 90–110 (ILLV…LTAV), 156–176 (LGAG…PHFL), 208–228 (MIGF…TEAA), 230–250 (WIYG…TIVF), and 262–282 (VLKA…VDWF).

The protein belongs to the UbiA prenyltransferase family. Protoheme IX farnesyltransferase subfamily.

The protein resides in the cell inner membrane. The catalysed reaction is heme b + (2E,6E)-farnesyl diphosphate + H2O = Fe(II)-heme o + diphosphate. Its pathway is porphyrin-containing compound metabolism; heme O biosynthesis; heme O from protoheme: step 1/1. Its function is as follows. Converts heme B (protoheme IX) to heme O by substitution of the vinyl group on carbon 2 of heme B porphyrin ring with a hydroxyethyl farnesyl side group. This chain is Protoheme IX farnesyltransferase, found in Salinibacter ruber (strain DSM 13855 / M31).